The sequence spans 62 residues: UPF0337 protein gsr0040 (62 aa).

Basic and acidic residues-rich tracts occupy residues 1 to 15 and 27 to 62; these read MGID…KDVQ and DDPK…IDNV. A disordered region spans residues 1–62; the sequence is MGIDKRAEAT…DQAHRTIDNV (62 aa).

The protein belongs to the UPF0337 (CsbD) family.

In Gloeobacter violaceus (strain ATCC 29082 / PCC 7421), this protein is UPF0337 protein gsr0040.